Reading from the N-terminus, the 129-residue chain is Small ribosomal subunit protein uS11 (129 aa).

The protein belongs to the universal ribosomal protein uS11 family. Part of the 30S ribosomal subunit. Interacts with proteins S7 and S18. Binds to IF-3.

Located on the platform of the 30S subunit, it bridges several disparate RNA helices of the 16S rRNA. Forms part of the Shine-Dalgarno cleft in the 70S ribosome. In Francisella tularensis subsp. tularensis (strain FSC 198), this protein is Small ribosomal subunit protein uS11.